The primary structure comprises 325 residues: Probable flavonol synthase 5 (325 aa).

Positions 1 to 21 (MEEERDHNASESSLPSLSKQL) are disordered. Polar residues predominate over residues 10–21 (SESSLPSLSKQL). The Fe2OG dioxygenase domain occupies 180–280 (TAEYVLRVNF…RISWPVFVAP (101 aa)). 188–190 (NFY) lines the 2-oxoglutarate pocket. 3 residues coordinate Fe cation: His-205, Asp-207, and His-261. 271-273 (RIS) contributes to the 2-oxoglutarate binding site.

This sequence belongs to the iron/ascorbate-dependent oxidoreductase family. It depends on Fe(2+) as a cofactor. As to expression, expressed in young seedlings.

It catalyses the reaction a (2R,3R)-dihydroflavonol + 2-oxoglutarate + O2 = a flavonol + succinate + CO2 + H2O. It participates in secondary metabolite biosynthesis; flavonoid biosynthesis. The sequence is that of Probable flavonol synthase 5 (FLS5) from Arabidopsis thaliana (Mouse-ear cress).